The primary structure comprises 250 residues: Triosephosphate isomerase (250 aa).

Asparagine 9 to lysine 11 is a substrate binding site. Histidine 94 acts as the Electrophile in catalysis. Glutamate 166 functions as the Proton acceptor in the catalytic mechanism. Substrate-binding positions include glycine 172, serine 212, and glycine 233–glycine 234.

This sequence belongs to the triosephosphate isomerase family. In terms of assembly, homodimer.

It is found in the cytoplasm. It catalyses the reaction D-glyceraldehyde 3-phosphate = dihydroxyacetone phosphate. It functions in the pathway carbohydrate biosynthesis; gluconeogenesis. Its pathway is carbohydrate degradation; glycolysis; D-glyceraldehyde 3-phosphate from glycerone phosphate: step 1/1. Functionally, involved in the gluconeogenesis. Catalyzes stereospecifically the conversion of dihydroxyacetone phosphate (DHAP) to D-glyceraldehyde-3-phosphate (G3P). This chain is Triosephosphate isomerase, found in Treponema denticola (strain ATCC 35405 / DSM 14222 / CIP 103919 / JCM 8153 / KCTC 15104).